The chain runs to 149 residues: Nucleoside deoxyribosyltransferase (149 aa).

E90 serves as the catalytic Nucleophile.

This sequence belongs to the nucleoside deoxyribosyltransferase family.

It catalyses the reaction 2-deoxy-D-ribosyl-base(1) + base(2) = 2-deoxy-D-ribosyl-base(2) + base(1).. Its pathway is nucleotide metabolism; nucleotide salvage pathway. Its function is as follows. Catalyzes the cleavage of the glycosidic bond of 2'-deoxyribonucleosides and the transfer of the deoxyribosyl moiety to an acceptor purine or pyrimidine base. The chain is Nucleoside deoxyribosyltransferase (ntd) from Lactobacillus johnsonii (strain CNCM I-12250 / La1 / NCC 533).